The chain runs to 70 residues: Small ribosomal subunit protein bS21 (70 aa).

It belongs to the bacterial ribosomal protein bS21 family.

In Nitrosomonas eutropha (strain DSM 101675 / C91 / Nm57), this protein is Small ribosomal subunit protein bS21.